Consider the following 72-residue polypeptide: Translation initiation factor IF-1 (72 aa).

An S1-like domain is found at M1 to K72.

This sequence belongs to the IF-1 family. Component of the 30S ribosomal translation pre-initiation complex which assembles on the 30S ribosome in the order IF-2 and IF-3, IF-1 and N-formylmethionyl-tRNA(fMet); mRNA recruitment can occur at any time during PIC assembly.

Its subcellular location is the cytoplasm. Functionally, one of the essential components for the initiation of protein synthesis. Stabilizes the binding of IF-2 and IF-3 on the 30S subunit to which N-formylmethionyl-tRNA(fMet) subsequently binds. Helps modulate mRNA selection, yielding the 30S pre-initiation complex (PIC). Upon addition of the 50S ribosomal subunit IF-1, IF-2 and IF-3 are released leaving the mature 70S translation initiation complex. This is Translation initiation factor IF-1 from Corynebacterium efficiens (strain DSM 44549 / YS-314 / AJ 12310 / JCM 11189 / NBRC 100395).